We begin with the raw amino-acid sequence, 275 residues long: Uridine-5'-phosphate dioxygenase (275 aa).

H105, D107, and H247 together coordinate Fe cation.

Fe(2+) is required as a cofactor.

It catalyses the reaction UMP + 2-oxoglutarate + O2 = uridine-5'-aldehyde + succinate + phosphate + CO2. Its pathway is antibiotic biosynthesis. Its activity is regulated as follows. Enhanced by ascorbic acid and inhibited by Zn(2+). Its function is as follows. Dioxygenase involved in the biosynthesis of the capuramycin-type nucleoside antibiotic A-102395. Catalyzes the dephosphorylation and oxidation of UMP to generate uridine-5'-aldehyde. Can also use the alternative alpha-keto acids pyruvate and alpha-ketoadipate (2-oxoadipate), with very low efficiency. Cannot use alpha-ketobutyrate, alpha-ketovalerate and oxaloacetate. In Amycolatopsis sp, this protein is Uridine-5'-phosphate dioxygenase.